The chain runs to 633 residues: Basic helix-loop-helix ARNT-like protein 1 (633 aa).

A disordered region spans residues 1–65 (MADQRMDISS…GMDTDKDDQH (65 aa)). Ser17 is modified (phosphoserine; by GSK3-beta). Positions 24 to 33 (ISSSLSTSGV) are enriched in polar residues. The short motif at 36–41 (NRKRKG) is the Nuclear localization signal element. A bHLH domain is found at 79-132 (NAREAHSQIEKRRRDKMNSFIDELASLVPTCNAMSRKLDKLTVLRMAVQHMKTL). Ser85 is subject to Phosphoserine. Ser97 is modified (phosphoserine; by CK2). The Nuclear export signal 1 motif lies at 149 to 159 (LSDDELKHLIL). In terms of domain architecture, PAS 1 spans 150-222 (SDDELKHLIL…EQLSSSDTAP (73 aa)). Lys259 is covalently cross-linked (Glycyl lysine isopeptide (Lys-Gly) (interchain with G-Cter in SUMO2 and SUMO3)). Lys266 participates in a covalent cross-link: Glycyl lysine isopeptide (Lys-Gly) (interchain with G-Cter in SUMO). The region spanning 333–403 (PQPVNGEIRV…ECHRQVLQTR (71 aa)) is the PAS 2 domain. Residues 368–376 (LAYLPQELL) carry the Nuclear export signal 2 motif. The PAC domain maps to 408–451 (TNCYKFKIKDGSFITLRSRWFSFMNPWTKEVEYIVSTNTVVSTS). Disordered regions lie at residues 469–499 (SMDS…RAGA) and 518–578 (GSSP…DNSS). The span at 518-528 (GSSPSSCGSSP) shows a compositional bias: low complexity. Residue Lys545 is modified to N6-acetyllysine. Residues 563 to 578 (GQIQDSSGYPYSDNSS) show a composition bias toward polar residues.

Component of the circadian clock oscillator which includes the CRY1/2 proteins, CLOCK or NPAS2, BMAL1 or BMAL2, CSNK1D and/or CSNK1E, TIMELESS and the PER1/2/3 proteins. Forms a heterodimer with CLOCK. The CLOCK-BMAL1 heterodimer is required for E-box-dependent transactivation, for CLOCK nuclear translocation and degradation, and, for phosphorylation of both CLOCK and BMAL1. Interacts with PER1, PER2, CRY1 and CRY2 and this interaction requires a translocation to the nucleus. Interaction of the CLOCK-BMAL1 heterodimer with PER or CRY inhibits transcription activation. Interacts with NPAS2. Post-translationally, ubiquitinated, leading to its proteasomal degradation. Deubiquitinated by USP9X. In terms of processing, O-glycosylated; contains O-GlcNAc. O-glycosylation by OGT prevents protein degradation by inhibiting ubiquitination. It also stabilizes the CLOCK-BMAL1 heterodimer thereby increasing CLOCK-BMAL1-mediated transcription of genes in the negative loop of the circadian clock such as PER1/2/3 and CRY1/2. Acetylated on Lys-545 by CLOCK during the repression phase of the circadian cycle. Acetylation facilitates recruitment of CRY1 protein and initiates the repression phase of the circadian cycle. Acetylated at Lys-545 by KAT5 during the activation phase of the cycle, leading to recruitment of the positive transcription elongation factor b (P-TEFb) and BRD4, followed by productive elongation of circadian transcripts. Deacetylated by SIRT1, which may result in decreased protein stability. Post-translationally, phosphorylated upon dimerization with CLOCK. Phosphorylation enhances the transcriptional activity, alters the subcellular localization and decreases the stability of the CLOCK-BMAL1 heterodimer by promoting its degradation. Phosphorylation shows circadian variations in the liver with a peak between CT10 to CT14. Phosphorylation at Ser-97 by CK2 is essential for its nuclear localization, its interaction with CLOCK and controls CLOCK nuclear entry. Dephosphorylation at Ser-85 is important for dimerization with CLOCK and transcriptional activity. In terms of processing, sumoylated on Lys-266 upon dimerization with CLOCK. Predominantly conjugated to poly-SUMO2/3 rather than SUMO1 and the level of these conjugates undergo rhythmic variation, peaking at CT9-CT12. Sumoylation localizes it exclusively to the PML body and promotes its ubiquitination in the PML body, ubiquitin-dependent proteasomal degradation and the transcriptional activity of the CLOCK-BMAL1 heterodimer. Undergoes lysosome-mediated degradation in a time-dependent manner in the liver. In terms of tissue distribution, expressed in pineal gland and retina.

The protein localises to the nucleus. The protein resides in the cytoplasm. It is found in the PML body. In terms of biological role, transcriptional activator which forms a core component of the circadian clock. The circadian clock, an internal time-keeping system, regulates various physiological processes through the generation of approximately 24 hour circadian rhythms in gene expression, which are translated into rhythms in metabolism and behavior. It is derived from the Latin roots 'circa' (about) and 'diem' (day) and acts as an important regulator of a wide array of physiological functions including metabolism, sleep, body temperature, blood pressure, endocrine, immune, cardiovascular, and renal function. Consists of two major components: the central clock, residing in the suprachiasmatic nucleus (SCN) of the brain, and the peripheral clocks that are present in nearly every tissue and organ system. Both the central and peripheral clocks can be reset by environmental cues, also known as Zeitgebers (German for 'timegivers'). The predominant Zeitgeber for the central clock is light, which is sensed by retina and signals directly to the SCN. The central clock entrains the peripheral clocks through neuronal and hormonal signals, body temperature and feeding-related cues, aligning all clocks with the external light/dark cycle. Circadian rhythms allow an organism to achieve temporal homeostasis with its environment at the molecular level by regulating gene expression to create a peak of protein expression once every 24 hours to control when a particular physiological process is most active with respect to the solar day. Transcription and translation of core clock components (CLOCK, NPAS2, BMAL1, BMAL2, PER1, PER2, PER3, CRY1 and CRY2) plays a critical role in rhythm generation, whereas delays imposed by post-translational modifications (PTMs) are important for determining the period (tau) of the rhythms (tau refers to the period of a rhythm and is the length, in time, of one complete cycle). A diurnal rhythm is synchronized with the day/night cycle, while the ultradian and infradian rhythms have a period shorter and longer than 24 hours, respectively. Disruptions in the circadian rhythms contribute to the pathology of cardiovascular diseases, cancer, metabolic syndromes and aging. A transcription/translation feedback loop (TTFL) forms the core of the molecular circadian clock mechanism. Transcription factors, CLOCK or NPAS2 and BMAL1 or BMAL2, form the positive limb of the feedback loop, act in the form of a heterodimer and activate the transcription of core clock genes and clock-controlled genes (involved in key metabolic processes), harboring E-box elements (5'-CACGTG-3') within their promoters. The core clock genes: PER1/2/3 and CRY1/2 which are transcriptional repressors form the negative limb of the feedback loop and interact with the CLOCK|NPAS2-BMAL1|BMAL2 heterodimer inhibiting its activity and thereby negatively regulating their own expression. This heterodimer also activates nuclear receptors NR1D1/2 and RORA/B/G, which form a second feedback loop and which activate and repress BMAL1 transcription, respectively. The preferred binding motif for the CLOCK-BMAL1 heterodimer is 5'-CACGTGA-3', which contains a flanking adenine nucleotide at the 3-prime end of the canonical 6-nucleotide E-box sequence. CLOCK specifically binds to the half-site 5'-CAC-3', while BMAL1 binds to the half-site 5'-GTGA-3'. Essential for the rhythmic interaction of CLOCK with ASS1 and plays a critical role in positively regulating CLOCK-mediated acetylation of ASS1. Plays a role in protecting against lethal sepsis by limiting the expression of immune checkpoint protein CD274 in macrophages in a PKM2-dependent manner. This Gallus gallus (Chicken) protein is Basic helix-loop-helix ARNT-like protein 1 (BMAL1).